The chain runs to 669 residues: DNA ligase (669 aa).

NAD(+) is bound by residues 34-38 (DAEYD), 83-84 (SL), and Glu114. Lys116 acts as the N6-AMP-lysine intermediate in catalysis. Residues Arg137, Glu171, Lys287, and Lys311 each contribute to the NAD(+) site. Positions 405, 408, 423, and 428 each coordinate Zn(2+). One can recognise a BRCT domain in the interval 591–669 (NVESYFAGKT…EERFLQELNK (79 aa)).

This sequence belongs to the NAD-dependent DNA ligase family. LigA subfamily. Mg(2+) serves as cofactor. Mn(2+) is required as a cofactor.

The enzyme catalyses NAD(+) + (deoxyribonucleotide)n-3'-hydroxyl + 5'-phospho-(deoxyribonucleotide)m = (deoxyribonucleotide)n+m + AMP + beta-nicotinamide D-nucleotide.. Functionally, DNA ligase that catalyzes the formation of phosphodiester linkages between 5'-phosphoryl and 3'-hydroxyl groups in double-stranded DNA using NAD as a coenzyme and as the energy source for the reaction. It is essential for DNA replication and repair of damaged DNA. This Bacillus cereus (strain ATCC 14579 / DSM 31 / CCUG 7414 / JCM 2152 / NBRC 15305 / NCIMB 9373 / NCTC 2599 / NRRL B-3711) protein is DNA ligase.